Reading from the N-terminus, the 230-residue chain is 2,3-bisphosphoglycerate-dependent phosphoglycerate mutase (230 aa).

Residues 8–15 (RHGESEWN), 21–22 (TG), Arg60, 87–90 (ERHY), Lys98, 114–115 (RR), and 183–184 (GN) contribute to the substrate site. His9 (tele-phosphohistidine intermediate) is an active-site residue. Glu87 acts as the Proton donor/acceptor in catalysis.

The protein belongs to the phosphoglycerate mutase family. BPG-dependent PGAM subfamily.

The catalysed reaction is (2R)-2-phosphoglycerate = (2R)-3-phosphoglycerate. It participates in carbohydrate degradation; glycolysis; pyruvate from D-glyceraldehyde 3-phosphate: step 3/5. Functionally, catalyzes the interconversion of 2-phosphoglycerate and 3-phosphoglycerate. This Streptococcus uberis (strain ATCC BAA-854 / 0140J) protein is 2,3-bisphosphoglycerate-dependent phosphoglycerate mutase.